We begin with the raw amino-acid sequence, 599 residues long: Sulfite reductase [NADPH] flavoprotein alpha-component (599 aa).

The 139-residue stretch at 64-202 folds into the Flavodoxin-like domain; that stretch reads ITIISASQTG…AASEWRARVV (139 aa). FMN-binding positions include 70 to 75, 117 to 120, and 153 to 162; these read SQTGNA, STQG, and LGDSSYEFFC. The FAD-binding FR-type domain maps to 234–448; it reads DAPLVASLSV…IEHNDNFRLP (215 aa). Residues Thr-322, Ala-356, 386-389, 404-406, Tyr-410, and 419-422 contribute to the FAD site; these read RLYS, TVG, and GGAS. NADP(+)-binding positions include 519–520, 525–529, and Asp-561; these read SR and KVYVQ. Position 599 (Tyr-599) interacts with FAD.

Belongs to the NADPH-dependent sulphite reductase flavoprotein subunit CysJ family. The protein in the N-terminal section; belongs to the flavodoxin family. This sequence in the C-terminal section; belongs to the flavoprotein pyridine nucleotide cytochrome reductase family. In terms of assembly, alpha(8)-beta(8). The alpha component is a flavoprotein, the beta component is a hemoprotein. Requires FAD as cofactor. FMN is required as a cofactor.

It carries out the reaction hydrogen sulfide + 3 NADP(+) + 3 H2O = sulfite + 3 NADPH + 4 H(+). Its pathway is sulfur metabolism; hydrogen sulfide biosynthesis; hydrogen sulfide from sulfite (NADPH route): step 1/1. Functionally, component of the sulfite reductase complex that catalyzes the 6-electron reduction of sulfite to sulfide. This is one of several activities required for the biosynthesis of L-cysteine from sulfate. The flavoprotein component catalyzes the electron flow from NADPH -&gt; FAD -&gt; FMN to the hemoprotein component. The protein is Sulfite reductase [NADPH] flavoprotein alpha-component of Shigella dysenteriae serotype 1 (strain Sd197).